The chain runs to 523 residues: DNA-directed primase/polymerase protein (523 aa).

Residues arginine 78, 117–119 (DLE), and 168–172 (KFSHH) contribute to the substrate site. 2 residues coordinate Mn(2+): aspartate 117 and glutamate 119. Positions 203–230 (LKKSNPEAPGENRDDVEGTQAKRRKTEE) are disordered. Substrate is bound by residues 258–261 (RNFR) and lysine 267. The Zn(2+) site is built by cysteine 390, histidine 397, cysteine 417, and cysteine 422. The Zinc knuckle motif motif lies at 390-423 (CHNVKRFHKSNNIIIVVDLKEEVWYQKCHDPECR). Over residues 467–477 (APAESTSTTPS) the composition is skewed to low complexity. Residues 467–523 (APAESTSTTPSEDTEGWGDWPDDPAYLRALQEVEEEEEDEDEEVPDELLLQAVNECE) form a disordered region. Acidic residues-rich tracts occupy residues 478-488 (EDTEGWGDWPD) and 498-512 (EVEEEEEDEDEEVPD).

The protein belongs to the eukaryotic-type primase small subunit family. The cofactor is Mn(2+).

The protein localises to the nucleus. It is found in the mitochondrion matrix. Its subcellular location is the chromosome. It catalyses the reaction ssDNA + n NTP = ssDNA/pppN(pN)n-1 hybrid + (n-1) diphosphate.. It carries out the reaction DNA(n) + a 2'-deoxyribonucleoside 5'-triphosphate = DNA(n+1) + diphosphate. Its function is as follows. DNA primase and DNA polymerase required to tolerate replication-stalling lesions by bypassing them. Required to facilitate mitochondrial and nuclear replication fork progression by initiating de novo DNA synthesis using dNTPs and acting as an error-prone DNA polymerase able to bypass certain DNA lesions. Shows a high capacity to tolerate DNA damage lesions such as 8oxoG and abasic sites in DNA. Provides different translesion synthesis alternatives when DNA replication is stalled: able to synthesize DNA primers downstream of lesions, such as UV lesions, R-loops and G-quadruplexes, to allow DNA replication to continue. Can also realign primers ahead of 'unreadable lesions' such as abasic sites and 6-4 photoproduct (6-4 pyrimidine-pyrimidinone), thereby skipping the lesion. Repriming avoids fork degradation while leading to accumulation of internal ssDNA gaps behind the forks. Also able to incorporate nucleotides opposite DNA lesions such as 8oxoG, like a regular translesion synthesis DNA polymerase. Also required for reinitiating stalled forks after ultraviolet (UV) damage during nuclear DNA replication. Required for mitochondrial DNA (mtDNA) synthesis and replication, by reinitiating synthesis after UV damage or in the presence of chain-terminating nucleotides. In addition to its role in DNA damage response, also required to maintain efficient nuclear and mitochondrial DNA replication in unperturbed cells. This is DNA-directed primase/polymerase protein from Danio rerio (Zebrafish).